A 171-amino-acid chain; its full sequence is uncharacterized protein (171 aa).

Residues 30-97 (AGRVSAAYHA…PKKGIIICAL (68 aa)) enclose the HTH gntR-type domain. The H-T-H motif DNA-binding region spans 57 to 76 (EIEIARQLGMSRTPVHEAMA).

This is an uncharacterized protein from Agrobacterium vitis (Rhizobium vitis).